A 290-amino-acid polypeptide reads, in one-letter code: Acetyl-coenzyme A carboxylase carboxyl transferase subunit beta (290 aa).

One can recognise a CoA carboxyltransferase N-terminal domain in the interval 27–290 (LWIKCPSCEA…LTRQPADAVA (264 aa)). Zn(2+)-binding residues include cysteine 31, cysteine 34, cysteine 50, and cysteine 53. The C4-type zinc-finger motif lies at 31 to 53 (CPSCEAVLYRNDVEANLHVCPKC).

Belongs to the AccD/PCCB family. As to quaternary structure, acetyl-CoA carboxylase is a heterohexamer composed of biotin carboxyl carrier protein (AccB), biotin carboxylase (AccC) and two subunits each of ACCase subunit alpha (AccA) and ACCase subunit beta (AccD). Requires Zn(2+) as cofactor.

Its subcellular location is the cytoplasm. The catalysed reaction is N(6)-carboxybiotinyl-L-lysyl-[protein] + acetyl-CoA = N(6)-biotinyl-L-lysyl-[protein] + malonyl-CoA. Its pathway is lipid metabolism; malonyl-CoA biosynthesis; malonyl-CoA from acetyl-CoA: step 1/1. Its function is as follows. Component of the acetyl coenzyme A carboxylase (ACC) complex. Biotin carboxylase (BC) catalyzes the carboxylation of biotin on its carrier protein (BCCP) and then the CO(2) group is transferred by the transcarboxylase to acetyl-CoA to form malonyl-CoA. The sequence is that of Acetyl-coenzyme A carboxylase carboxyl transferase subunit beta from Paraburkholderia phymatum (strain DSM 17167 / CIP 108236 / LMG 21445 / STM815) (Burkholderia phymatum).